We begin with the raw amino-acid sequence, 185 residues long: MARPDKAAAVAELTDQFRSSNAAVLTEYRGLTVAQLKELRRSLGENAQYAVVKNTLTKIAANEAGIDTLDDLFSGPTAVAFVTGDPVESAKGLRDFAKDNPNLIIKGGVLDGKALSADEIKKLADLESREVLLSKLAGAFKGKQTQAAQVFQALPSKFVRTAEALRAKKEEQGGAGTPAPAEAAE.

The tract at residues 165 to 185 (LRAKKEEQGGAGTPAPAEAAE) is disordered.

This sequence belongs to the universal ribosomal protein uL10 family. Part of the ribosomal stalk of the 50S ribosomal subunit. The N-terminus interacts with L11 and the large rRNA to form the base of the stalk. The C-terminus forms an elongated spine to which L12 dimers bind in a sequential fashion forming a multimeric L10(L12)X complex.

Its function is as follows. Forms part of the ribosomal stalk, playing a central role in the interaction of the ribosome with GTP-bound translation factors. The chain is Large ribosomal subunit protein uL10 from Streptomyces griseus subsp. griseus (strain JCM 4626 / CBS 651.72 / NBRC 13350 / KCC S-0626 / ISP 5235).